The following is a 192-amino-acid chain: Imidazoleglycerol-phosphate dehydratase (192 aa).

Belongs to the imidazoleglycerol-phosphate dehydratase family.

The protein resides in the cytoplasm. The enzyme catalyses D-erythro-1-(imidazol-4-yl)glycerol 3-phosphate = 3-(imidazol-4-yl)-2-oxopropyl phosphate + H2O. The protein operates within amino-acid biosynthesis; L-histidine biosynthesis; L-histidine from 5-phospho-alpha-D-ribose 1-diphosphate: step 6/9. In Caldivirga maquilingensis (strain ATCC 700844 / DSM 13496 / JCM 10307 / IC-167), this protein is Imidazoleglycerol-phosphate dehydratase.